The following is an 82-amino-acid chain: MVTIRLARGGAKKRPFYQVVVTDSRNARDGRFIERVGFYNPLATGNAEELRLDVDRVEHWVAQGATVSERVAGLIKSAKKSA.

Belongs to the bacterial ribosomal protein bS16 family.

This is Small ribosomal subunit protein bS16 from Proteus mirabilis (strain HI4320).